Reading from the N-terminus, the 254-residue chain is uncharacterized protein (254 aa).

5 helical membrane passes run 33-53 (MLWV…LFFI), 70-90 (FNKL…LFKS), 92-112 (FALS…LNFM), 133-153 (FIIF…ILLI), and 223-243 (FLVF…PLIF).

To M.jannaschii MJ0902.

It localises to the cell membrane. This is an uncharacterized protein from Methanocaldococcus jannaschii (strain ATCC 43067 / DSM 2661 / JAL-1 / JCM 10045 / NBRC 100440) (Methanococcus jannaschii).